The primary structure comprises 216 residues: Nucleoid occlusion factor SlmA (216 aa).

Positions 1 to 23 (MAEQLTLDSIEPEPEKQSAKIEK) are disordered. The span at 13-23 (EPEKQSAKIEK) shows a compositional bias: basic and acidic residues. The HTH tetR-type domain occupies 28-88 (ERRQQVLTVL…ALIENIESSL (61 aa)). Positions 51–70 (TTARLAKEVGVSEAALYRYF) form a DNA-binding region, H-T-H motif.

The protein belongs to the nucleoid occlusion factor SlmA family. As to quaternary structure, homodimer. Interacts with FtsZ.

The protein localises to the cytoplasm. It localises to the nucleoid. Required for nucleoid occlusion (NO) phenomenon, which prevents Z-ring formation and cell division over the nucleoid. Acts as a DNA-associated cell division inhibitor that binds simultaneously chromosomal DNA and FtsZ, and disrupts the assembly of FtsZ polymers. SlmA-DNA-binding sequences (SBS) are dispersed on non-Ter regions of the chromosome, preventing FtsZ polymerization at these regions. The chain is Nucleoid occlusion factor SlmA from Mannheimia succiniciproducens (strain KCTC 0769BP / MBEL55E).